Consider the following 328-residue polypeptide: Homeobox protein Hox-D1 (328 aa).

Residues 204 to 209 (TFEWMK) carry the Antp-type hexapeptide motif. The segment at residues 229–288 (SSAIRTNFSTKQLTELEKEFHFNKYLTRARRIEIANCLHLNDTQVKIWFQNRRMKQKKRE) is a DNA-binding region (homeobox). The disordered stretch occupies residues 305–328 (PLSGTTPTKFIKNPGSPSQSQEPS). Over residues 319 to 328 (GSPSQSQEPS) the composition is skewed to polar residues.

It belongs to the Antp homeobox family. Labial subfamily.

The protein localises to the nucleus. In terms of biological role, sequence-specific transcription factor which is part of a developmental regulatory system that provides cells with specific positional identities on the anterior-posterior axis. Acts on the anterior body structures. The polypeptide is Homeobox protein Hox-D1 (HOXD1) (Homo sapiens (Human)).